We begin with the raw amino-acid sequence, 424 residues long: Adenylosuccinate synthetase (424 aa).

GTP is bound by residues 12–18 (GDEGKGK) and 40–42 (GHT). Residue aspartate 13 is the Proton acceptor of the active site. Aspartate 13 and glycine 40 together coordinate Mg(2+). Residues 13 to 16 (DEGK), 38 to 41 (NAGH), threonine 130, arginine 144, asparagine 220, threonine 235, and arginine 299 contribute to the IMP site. Histidine 41 serves as the catalytic Proton donor. Residue 295-301 (VTTGRRR) coordinates substrate. Residues arginine 301, 327–329 (KLD), and 412–414 (GTG) each bind GTP.

This sequence belongs to the adenylosuccinate synthetase family. Homodimer. Mg(2+) serves as cofactor.

It localises to the cytoplasm. The catalysed reaction is IMP + L-aspartate + GTP = N(6)-(1,2-dicarboxyethyl)-AMP + GDP + phosphate + 2 H(+). It participates in purine metabolism; AMP biosynthesis via de novo pathway; AMP from IMP: step 1/2. Its function is as follows. Plays an important role in the de novo pathway and in the salvage pathway of purine nucleotide biosynthesis. Catalyzes the first committed step in the biosynthesis of AMP from IMP. In Aspergillus niger (strain ATCC MYA-4892 / CBS 513.88 / FGSC A1513), this protein is Adenylosuccinate synthetase.